The primary structure comprises 711 residues: Polyribonucleotide nucleotidyltransferase (711 aa).

Residues Asp-490 and Asp-496 each coordinate Mg(2+). One can recognise a KH domain in the interval 557 to 619 (PRIETMTIPK…KCIDDAMRII (63 aa)). The S1 motif domain maps to 629–699 (GEVYVGKVRS…KTGKFKLSHK (71 aa)).

It belongs to the polyribonucleotide nucleotidyltransferase family. It depends on Mg(2+) as a cofactor.

It localises to the cytoplasm. The catalysed reaction is RNA(n+1) + phosphate = RNA(n) + a ribonucleoside 5'-diphosphate. Involved in mRNA degradation. Catalyzes the phosphorolysis of single-stranded polyribonucleotides processively in the 3'- to 5'-direction. The protein is Polyribonucleotide nucleotidyltransferase of Phocaeicola vulgatus (strain ATCC 8482 / DSM 1447 / JCM 5826 / CCUG 4940 / NBRC 14291 / NCTC 11154) (Bacteroides vulgatus).